We begin with the raw amino-acid sequence, 874 residues long: Alanine--tRNA ligase (874 aa).

4 residues coordinate Zn(2+): H564, H568, C665, and H669.

This sequence belongs to the class-II aminoacyl-tRNA synthetase family. The cofactor is Zn(2+).

It is found in the cytoplasm. It catalyses the reaction tRNA(Ala) + L-alanine + ATP = L-alanyl-tRNA(Ala) + AMP + diphosphate. Catalyzes the attachment of alanine to tRNA(Ala) in a two-step reaction: alanine is first activated by ATP to form Ala-AMP and then transferred to the acceptor end of tRNA(Ala). Also edits incorrectly charged Ser-tRNA(Ala) and Gly-tRNA(Ala) via its editing domain. The chain is Alanine--tRNA ligase from Paraburkholderia xenovorans (strain LB400).